An 83-amino-acid chain; its full sequence is uncharacterized protein (83 aa).

The segment at 40–65 (RMQAGASPDEDNDVNGETSFSRSFGG) is disordered. The segment covering 54–65 (NGETSFSRSFGG) has biased composition (polar residues).

This is an uncharacterized protein from Dictyostelium discoideum (Social amoeba).